Here is a 434-residue protein sequence, read N- to C-terminus: Eukaryotic peptide chain release factor subunit 1-2 (434 aa).

At A2 the chain carries N-acetylalanine.

This sequence belongs to the eukaryotic release factor 1 family. Heterodimer of two subunits, one of which binds GTP.

The protein localises to the cytoplasm. Functionally, directs the termination of nascent peptide synthesis (translation) in response to the termination codons UAA, UAG and UGA. Modulates plant growth and development. This chain is Eukaryotic peptide chain release factor subunit 1-2, found in Arabidopsis thaliana (Mouse-ear cress).